The sequence spans 476 residues: Adenosylhomocysteinase (476 aa).

Substrate is bound by residues threonine 67, aspartate 142, and glutamate 202. 203–205 contacts NAD(+); the sequence is TTT. Substrate-binding residues include lysine 232 and aspartate 236. NAD(+)-binding positions include asparagine 237, 266-271, glutamate 289, asparagine 324, 345-347, and asparagine 390; these read GYGDVG and IGH.

This sequence belongs to the adenosylhomocysteinase family. NAD(+) serves as cofactor.

It localises to the cytoplasm. The enzyme catalyses S-adenosyl-L-homocysteine + H2O = L-homocysteine + adenosine. The protein operates within amino-acid biosynthesis; L-homocysteine biosynthesis; L-homocysteine from S-adenosyl-L-homocysteine: step 1/1. May play a key role in the regulation of the intracellular concentration of adenosylhomocysteine. In Prochlorococcus marinus (strain SARG / CCMP1375 / SS120), this protein is Adenosylhomocysteinase.